We begin with the raw amino-acid sequence, 155 residues long: V-type proton ATPase 16 kDa proteolipid subunit c (155 aa).

Over 1 to 10 (MADIKNNPEY) the chain is Lumenal. A helical transmembrane segment spans residues 11-33 (SSFFGVMGASSAMVFSAMGAAYG). Residues 34-55 (TAKSGTGIAAMSVMRPELIMKS) are Cytoplasmic-facing. Residues 56 to 76 (IIPVVMAGIIAIYGLVVAVLI) traverse the membrane as a helical segment. The Lumenal segment spans residues 77–92 (ANSLTDGITLYRSFLQ). Residues 93–114 (LGAGLSVGLSGLAAGFAIGIVG) traverse the membrane as a helical segment. The Cytoplasmic portion of the chain corresponds to 115-131 (DAGVRGTAQQPRLFVGM). A helical transmembrane segment spans residues 132-152 (ILILIFAEVLGLYGLIVALIL). Topologically, residues 153–155 (STK) are lumenal.

Belongs to the V-ATPase proteolipid subunit family. In terms of assembly, V-ATPase is a heteromultimeric enzyme made up of two complexes: the ATP-hydrolytic V1 complex and the proton translocation V0 complex. The V1 complex consists of three catalytic AB heterodimers that form a heterohexamer, three peripheral stalks each consisting of EG heterodimers, one central rotor including subunits D and F, and the regulatory subunits C and H. The proton translocation complex V0 consists of the proton transport subunit a, a ring of proteolipid subunits c9c'', rotary subunit d, subunits e and f, and the accessory subunits ATP6AP1/Ac45 and ATP6AP2/PRR. Interacts with the V0 complex V-ATPase subunit a4 ATP6V0A4. Interacts with LASS2. Interacts with RNF182; this interaction leads to ubiquitination and degradation via the proteasome pathway. Ubiquitinated by RNF182, leading to its degradation via the ubiquitin-proteasome pathway.

It is found in the cytoplasmic vesicle. The protein localises to the clathrin-coated vesicle membrane. Its subcellular location is the secretory vesicle. It localises to the synaptic vesicle membrane. Functionally, proton-conducting pore forming subunit of the V0 complex of vacuolar(H+)-ATPase (V-ATPase), a multisubunit enzyme composed of a peripheral complex (V1) that hydrolyzes ATP and a membrane integral complex (V0) that translocates protons. V-ATPase is responsible for acidifying and maintaining the pH of intracellular compartments and in some cell types, is targeted to the plasma membrane, where it is responsible for acidifying the extracellular environment. In Mus musculus (Mouse), this protein is V-type proton ATPase 16 kDa proteolipid subunit c (Atp6v0c).